Here is a 196-residue protein sequence, read N- to C-terminus: Endonuclease V (196 aa).

2 residues coordinate Mg(2+): Asp37 and Asp98.

It belongs to the endonuclease V family. Mg(2+) is required as a cofactor.

It localises to the cytoplasm. It catalyses the reaction Endonucleolytic cleavage at apurinic or apyrimidinic sites to products with a 5'-phosphate.. Functionally, DNA repair enzyme involved in the repair of deaminated bases. Selectively cleaves double-stranded DNA at the second phosphodiester bond 3' to a deoxyinosine leaving behind the intact lesion on the nicked DNA. The protein is Endonuclease V of Sulfolobus acidocaldarius (strain ATCC 33909 / DSM 639 / JCM 8929 / NBRC 15157 / NCIMB 11770).